The primary structure comprises 215 residues: Large ribosomal subunit protein uL3 (215 aa).

Residues 136 to 155 (GVSISHRSHGSTGQRQDPGK) are disordered. Glutamine 151 is modified (N5-methylglutamine).

Belongs to the universal ribosomal protein uL3 family. In terms of assembly, part of the 50S ribosomal subunit. Forms a cluster with proteins L14 and L19. In terms of processing, methylated by PrmB.

Its function is as follows. One of the primary rRNA binding proteins, it binds directly near the 3'-end of the 23S rRNA, where it nucleates assembly of the 50S subunit. This chain is Large ribosomal subunit protein uL3, found in Rickettsia africae (strain ESF-5).